Here is a 157-residue protein sequence, read N- to C-terminus: Ribosomal RNA large subunit methyltransferase H (157 aa).

S-adenosyl-L-methionine is bound by residues leucine 73, glycine 104, and 123-128 (LGPLTL).

The protein belongs to the RNA methyltransferase RlmH family. In terms of assembly, homodimer.

Its subcellular location is the cytoplasm. The enzyme catalyses pseudouridine(1915) in 23S rRNA + S-adenosyl-L-methionine = N(3)-methylpseudouridine(1915) in 23S rRNA + S-adenosyl-L-homocysteine + H(+). Functionally, specifically methylates the pseudouridine at position 1915 (m3Psi1915) in 23S rRNA. The sequence is that of Ribosomal RNA large subunit methyltransferase H from Xylella fastidiosa (strain M23).